The primary structure comprises 178 residues: Alkyl hydroperoxide reductase AhpD (178 aa).

Catalysis depends on cysteine 131, which acts as the Proton donor. Cysteine 131 and cysteine 134 form a disulfide bridge. The active-site Cysteine sulfenic acid (-SOH) intermediate is the cysteine 134.

It belongs to the AhpD family.

It carries out the reaction N(6)-[(R)-dihydrolipoyl]-L-lysyl-[lipoyl-carrier protein] + a hydroperoxide = N(6)-[(R)-lipoyl]-L-lysyl-[lipoyl-carrier protein] + an alcohol + H2O. Antioxidant protein with alkyl hydroperoxidase activity. Required for the reduction of the AhpC active site cysteine residues and for the regeneration of the AhpC enzyme activity. The chain is Alkyl hydroperoxide reductase AhpD from Methylocella silvestris (strain DSM 15510 / CIP 108128 / LMG 27833 / NCIMB 13906 / BL2).